Here is a 251-residue protein sequence, read N- to C-terminus: Flap endonuclease Xni (251 aa).

Aspartate 104 lines the Mg(2+) pocket. One can recognise a 5'-3' exonuclease domain in the interval 160-249; it reads VQPQQLPDYW…IDGNLQQLRL (90 aa). K(+) contacts are provided by leucine 171, alanine 172, proline 180, valine 182, and isoleucine 185. Positions 184–189 are interaction with DNA; sequence GIGPKS.

It belongs to the Xni family. The cofactor is Mg(2+). K(+) serves as cofactor.

Functionally, has flap endonuclease activity. During DNA replication, flap endonucleases cleave the 5'-overhanging flap structure that is generated by displacement synthesis when DNA polymerase encounters the 5'-end of a downstream Okazaki fragment. This Escherichia coli O81 (strain ED1a) protein is Flap endonuclease Xni.